Consider the following 764-residue polypeptide: 5-methyltetrahydropteroyltriglutamate--homocysteine methyltransferase (764 aa).

Residues 16–19 (RELK) and lysine 115 contribute to the 5-methyltetrahydropteroyltri-L-glutamate site. Residues 435–437 (IGS) and glutamate 488 each bind L-homocysteine. L-methionine is bound by residues 435–437 (IGS) and glutamate 488. 5-methyltetrahydropteroyltri-L-glutamate contacts are provided by residues 519 to 520 (RC) and tryptophan 565. Aspartate 603 provides a ligand contact to L-homocysteine. Aspartate 603 is an L-methionine binding site. Glutamate 609 serves as a coordination point for 5-methyltetrahydropteroyltri-L-glutamate. Histidine 645, cysteine 647, and glutamate 669 together coordinate Zn(2+). Histidine 698 (proton donor) is an active-site residue. Cysteine 730 provides a ligand contact to Zn(2+).

Belongs to the vitamin-B12 independent methionine synthase family. Zn(2+) is required as a cofactor.

It catalyses the reaction 5-methyltetrahydropteroyltri-L-glutamate + L-homocysteine = tetrahydropteroyltri-L-glutamate + L-methionine. It participates in amino-acid biosynthesis; L-methionine biosynthesis via de novo pathway; L-methionine from L-homocysteine (MetE route): step 1/1. Functionally, catalyzes the transfer of a methyl group from 5-methyltetrahydrofolate to homocysteine resulting in methionine formation. This is 5-methyltetrahydropteroyltriglutamate--homocysteine methyltransferase from Burkholderia pseudomallei (strain 1106a).